Consider the following 29-residue polypeptide: Cyclotide vibi-C (29 aa).

Residues 1 to 29 (GLPVCGETCAFGSCYTPGCSCSWPVCTRN) constitute a cross-link (cyclopeptide (Gly-Asn)). 3 disulfide bridges follow: Cys5–Cys19, Cys9–Cys21, and Cys14–Cys26.

In terms of processing, this is a cyclic peptide.

Functionally, probably participates in a plant defense mechanism. The polypeptide is Cyclotide vibi-C (Viola biflora (Yellow wood violet)).